The primary structure comprises 27 residues: Weak neurotoxin E3 (27 aa).

As to expression, expressed by the venom gland.

The protein resides in the secreted. In terms of biological role, binds to muscle nicotinic acetylcholine receptor (nAChR) and inhibit acetylcholine from binding to the receptor, thereby impairing neuromuscular transmission. This chain is Weak neurotoxin E3, found in Micrurus pyrrhocryptus (Coral snake).